The following is a 397-amino-acid chain: Lysophospholipid transporter LplT (397 aa).

Residues 1–17 (MSESVHTNTSLWSKGMK) are Periplasmic-facing. The chain crosses the membrane as a helical span at residues 18 to 38 (AVIVAQFLSAFGDNALLFATL). Residues 39 to 52 (ALLKAQFYPEWSQP) are Cytoplasmic-facing. The helical transmembrane segment at 53 to 73 (ILQMVFVGAYILFAPFVGQVA) threads the bilayer. The Periplasmic segment spans residues 74–90 (DSFAKGRVMMFANGLKL). The chain crosses the membrane as a helical span at residues 91–111 (LGAASICFGINPFLGYTLVGV). The Cytoplasmic segment spans residues 112-144 (GAAAYSPAKYGILGELTTGSKLVKANGLMEAST). A helical membrane pass occupies residues 145–165 (IAAILLGSVAGGVLADWHVLV). Ala166 is a topological domain (periplasmic). The chain crosses the membrane as a helical span at residues 167–187 (LAACALAYGGAVVANIYIPKL). At 188–226 (AAARPGQSWNLISMTRSFLNACTSLWRNGETRFSLVGTS) the chain is on the cytoplasmic side. The helical transmembrane segment at 227-247 (LFWGAGVTLRFLLVLWVPVAL) threads the bilayer. Residues 248–256 (GITDNATPT) lie on the Periplasmic side of the membrane. A helical membrane pass occupies residues 257–277 (YLNAMVAIGIVVGAGAAAKLV). Residues 278–280 (TLE) lie on the Cytoplasmic side of the membrane. A helical membrane pass occupies residues 281 to 301 (TVSRCMPAGILIGVVVLIFSL). Residues 302–304 (QHE) are Periplasmic-facing. Residues 305–325 (LLPAYALLMLIGVLGGFFVVP) form a helical membrane-spanning segment. The Cytoplasmic portion of the chain corresponds to 326-343 (LNALLQERGKKSVGAGNA). The chain crosses the membrane as a helical span at residues 344–364 (IAVQNLGENSAMLLMLGIYSL). The Periplasmic portion of the chain corresponds to 365-366 (AV). A helical membrane pass occupies residues 367–387 (MVGIPVVPIGIGFGALFALAI). Residues 388–397 (TALWIWQRRH) lie on the Cytoplasmic side of the membrane.

This sequence belongs to the major facilitator superfamily. LplT (TC 2.A.1.42) family.

It is found in the cell inner membrane. Catalyzes the facilitated diffusion of 2-acyl-glycero-3-phosphoethanolamine (2-acyl-GPE) into the cell. This is Lysophospholipid transporter LplT from Escherichia coli O7:K1 (strain IAI39 / ExPEC).